We begin with the raw amino-acid sequence, 422 residues long: MYDFVIIGGGIIGMSTAMQLIDVYPDARIALLEKESAPACHQTGHNSGVIHAGVYYTPGSLKARFCLAGNLATKTFCDQNNIRYDTCGKMLVATSELEMARMRALWERTAANGLEREWLSAAELREREPNIIGLGGIFVPSSGIVSYRDVATAMANRFQAKGGEIIYHAEVSALTEHAAGVVIRTSQGREIETATLIGCAGLMADRLVKMLGVEPGFIICPFRGEYFRLAPRHNRIVNHLIYPIPDPAMPFLGVHLTRMIDGSVTVGPNAVLALKREGYRKRDVSFTDTLEVFRSAGIRRVLKNHLLSGLGEMKNSLCKSGYLRRVQKYCPSLTVNDLQPWPAGVRAQAVSPDGKLIDDFLFVATPRSIHTCNAPSPAATSAIPIGAHIVSKVQALRESQSNPGRTLRAARNVDTLHAAFTR.

This sequence belongs to the L2HGDH family. It depends on FAD as a cofactor.

Its subcellular location is the cell inner membrane. It carries out the reaction (S)-2-hydroxyglutarate + a quinone = a quinol + 2-oxoglutarate. It functions in the pathway amino-acid degradation. In terms of biological role, catalyzes the dehydrogenation of L-2-hydroxyglutarate (L2HG) to alpha-ketoglutarate and couples to the respiratory chain by feeding electrons from the reaction into the membrane quinone pool. Functions in a L-lysine degradation pathway that proceeds via cadaverine, glutarate and L-2-hydroxyglutarate. Also displays some oxidase activity in vitro on L-2-hydroxyglutarate with O2 as the electron acceptor, but this activity is most likely not physiological. The chain is L-2-hydroxyglutarate dehydrogenase from Salmonella houtenae.